Reading from the N-terminus, the 248-residue chain is Adenosylcobinamide-GDP ribazoletransferase (248 aa).

7 consecutive transmembrane segments (helical) span residues 24–44, 70–90, 106–126, 134–154, 168–188, 189–209, and 228–248; these read EINLKKGSALLPFVGVIIGAW, IIITGGFHVDALADTADGLFS, VGANGVIAICFYFLFYGSLFL, IGWLFFVLPIVAKGVTMLLFA, IFLGVPWWPVVIAQVIVLVAL, GAFFSYIGVIAYAGVILFTII, and AGGQMGQLICLFCLVLLWGLI.

The protein belongs to the CobS family. Mg(2+) serves as cofactor.

The protein resides in the cell membrane. It catalyses the reaction alpha-ribazole + adenosylcob(III)inamide-GDP = adenosylcob(III)alamin + GMP + H(+). The enzyme catalyses alpha-ribazole 5'-phosphate + adenosylcob(III)inamide-GDP = adenosylcob(III)alamin 5'-phosphate + GMP + H(+). It participates in cofactor biosynthesis; adenosylcobalamin biosynthesis; adenosylcobalamin from cob(II)yrinate a,c-diamide: step 7/7. Its function is as follows. Joins adenosylcobinamide-GDP and alpha-ribazole to generate adenosylcobalamin (Ado-cobalamin). Also synthesizes adenosylcobalamin 5'-phosphate from adenosylcobinamide-GDP and alpha-ribazole 5'-phosphate. The chain is Adenosylcobinamide-GDP ribazoletransferase from Listeria monocytogenes serotype 4b (strain F2365).